Here is a 418-residue protein sequence, read N- to C-terminus: 26S proteasome regulatory subunit 6B (418 aa).

N-acetylmethionine is present on Met-1. The residue at position 21 (Ser-21) is a Phosphoserine. Thr-25 is modified (phosphothreonine). Position 28 is a phosphoserine (Ser-28). Gly-206–Thr-213 provides a ligand contact to ATP. Residues Lys-397 and Lys-401 each carry the N6-acetyllysine modification.

Belongs to the AAA ATPase family. As to quaternary structure, component of the 19S proteasome regulatory particle complex. The 26S proteasome consists of a 20S core particle (CP) and two 19S regulatory subunits (RP). The regulatory particle is made of a lid composed of 9 subunits, a base containing 6 ATPases including PSMC4 and few additional components. Interacts with NR1I3. Interacts with PAAF1. Interacts with TRIM5. Interacts with ZFAND1.

The protein localises to the cytoplasm. It localises to the nucleus. Component of the 26S proteasome, a multiprotein complex involved in the ATP-dependent degradation of ubiquitinated proteins. This complex plays a key role in the maintenance of protein homeostasis by removing misfolded or damaged proteins, which could impair cellular functions, and by removing proteins whose functions are no longer required. Therefore, the proteasome participates in numerous cellular processes, including cell cycle progression, apoptosis, or DNA damage repair. PSMC4 belongs to the heterohexameric ring of AAA (ATPases associated with diverse cellular activities) proteins that unfolds ubiquitinated target proteins that are concurrently translocated into a proteolytic chamber and degraded into peptides. This is 26S proteasome regulatory subunit 6B (PSMC4) from Bos taurus (Bovine).